Here is a 568-residue protein sequence, read N- to C-terminus: Proline--tRNA ligase (568 aa).

Belongs to the class-II aminoacyl-tRNA synthetase family. ProS type 1 subfamily. In terms of assembly, homodimer.

Its subcellular location is the cytoplasm. The catalysed reaction is tRNA(Pro) + L-proline + ATP = L-prolyl-tRNA(Pro) + AMP + diphosphate. Functionally, catalyzes the attachment of proline to tRNA(Pro) in a two-step reaction: proline is first activated by ATP to form Pro-AMP and then transferred to the acceptor end of tRNA(Pro). As ProRS can inadvertently accommodate and process non-cognate amino acids such as alanine and cysteine, to avoid such errors it has two additional distinct editing activities against alanine. One activity is designated as 'pretransfer' editing and involves the tRNA(Pro)-independent hydrolysis of activated Ala-AMP. The other activity is designated 'posttransfer' editing and involves deacylation of mischarged Ala-tRNA(Pro). The misacylated Cys-tRNA(Pro) is not edited by ProRS. The polypeptide is Proline--tRNA ligase (Listeria monocytogenes serotype 4b (strain F2365)).